Reading from the N-terminus, the 601-residue chain is NADH-quinone oxidoreductase subunit C/D (601 aa).

The tract at residues M1–Q191 is NADH dehydrogenase I subunit C. Residues D215–R601 are NADH dehydrogenase I subunit D.

In the N-terminal section; belongs to the complex I 30 kDa subunit family. It in the C-terminal section; belongs to the complex I 49 kDa subunit family. As to quaternary structure, NDH-1 is composed of 13 different subunits. Subunits NuoB, CD, E, F, and G constitute the peripheral sector of the complex.

It is found in the cell inner membrane. It carries out the reaction a quinone + NADH + 5 H(+)(in) = a quinol + NAD(+) + 4 H(+)(out). NDH-1 shuttles electrons from NADH, via FMN and iron-sulfur (Fe-S) centers, to quinones in the respiratory chain. The immediate electron acceptor for the enzyme in this species is believed to be ubiquinone. Couples the redox reaction to proton translocation (for every two electrons transferred, four hydrogen ions are translocated across the cytoplasmic membrane), and thus conserves the redox energy in a proton gradient. The protein is NADH-quinone oxidoreductase subunit C/D of Shewanella oneidensis (strain ATCC 700550 / JCM 31522 / CIP 106686 / LMG 19005 / NCIMB 14063 / MR-1).